Here is a 272-residue protein sequence, read N- to C-terminus: Glutamate racemase (272 aa).

Residues 16-17 (DS) and 48-49 (YG) contribute to the substrate site. Cysteine 79 acts as the Proton donor/acceptor in catalysis. Residue 80 to 81 (NT) participates in substrate binding. The active-site Proton donor/acceptor is cysteine 191. 192-193 (TH) contacts substrate.

Belongs to the aspartate/glutamate racemases family.

It carries out the reaction L-glutamate = D-glutamate. The protein operates within cell wall biogenesis; peptidoglycan biosynthesis. Provides the (R)-glutamate required for cell wall biosynthesis. This chain is Glutamate racemase, found in Chlorobaculum tepidum (strain ATCC 49652 / DSM 12025 / NBRC 103806 / TLS) (Chlorobium tepidum).